The following is a 379-amino-acid chain: MLPSRKTKRVFSCDFTPGRKRRRCVVVPSSVSPVPENTTGADLLDSIPDDLVISILCKLGSTSRCPADFINVLLTCKRLKGLAMNPIVLSRLSPKAIAVKAHNWSEYSHRFLKRCVDAGSLEACYTLGMIRFYCLQNRGNGASLMAKAAISSHAPALYSLAVIQFNGSGGSKNDKDLRAGVALCARAAFLGHVDALRELGHCLQDGYGVPQNVSEGRRFLVQANARELAAVLSSGIQARSTWLSLSQPPPPVVPNHGQQTCPLLSDFGCNVPAPETHPANRFLADWFAVRGGDCPGDGLRLCSHAGCGRPETRKHEFRRCSVCGVVNYCSRACQALDWKLRHKMDCAPVQRWLEEGDGGEGNVQIDGNGNGDNVLLPMS.

The region spanning 41 to 92 is the F-box domain; it reads ADLLDSIPDDLVISILCKLGSTSRCPADFINVLLTCKRLKGLAMNPIVLSRL. Positions 304, 307, 320, 323, 329, 333, 342, and 346 each coordinate Zn(2+). An MYND-type; atypical zinc finger spans residues 304-346; it reads HAGCGRPETRKHEFRRCSVCGVVNYCSRACQALDWKLRHKMDC. The interval 358–379 is disordered; sequence GGEGNVQIDGNGNGDNVLLPMS.

As to quaternary structure, part of a SCF (ASK-cullin-F-box) protein ligase complex. Interacts with SKP1A/ASK1, SKP1B/ASK2, ASK4, ASK11 and ASK13.

The protein resides in the nucleus. The protein operates within protein modification; protein ubiquitination. In terms of biological role, component of SCF(ASK-cullin-F-box) E3 ubiquitin ligase complexes, which may mediate the ubiquitination and subsequent proteasomal degradation of target proteins. In Arabidopsis thaliana (Mouse-ear cress), this protein is F-box protein At1g67340.